The following is a 184-amino-acid chain: Large ribosomal subunit protein uL15 (184 aa).

Positions M1 to P55 are disordered. A compositionally biased stretch (gly residues) spans R21–N35.

Belongs to the universal ribosomal protein uL15 family. In terms of assembly, part of the 50S ribosomal subunit.

Binds to the 23S rRNA. The sequence is that of Large ribosomal subunit protein uL15 from Prosthecochloris aestuarii (strain DSM 271 / SK 413).